Here is a 119-residue protein sequence, read N- to C-terminus: Large ribosomal subunit protein uL18 (119 aa).

It belongs to the universal ribosomal protein uL18 family. Part of the 50S ribosomal subunit; part of the 5S rRNA/L5/L18/L25 subcomplex. Contacts the 5S and 23S rRNAs.

In terms of biological role, this is one of the proteins that bind and probably mediate the attachment of the 5S RNA into the large ribosomal subunit, where it forms part of the central protuberance. The protein is Large ribosomal subunit protein uL18 of Clostridium perfringens (strain 13 / Type A).